Reading from the N-terminus, the 538-residue chain is Ribulokinase 1 (538 aa).

Belongs to the ribulokinase family.

It carries out the reaction D-ribulose + ATP = D-ribulose 5-phosphate + ADP + H(+). The catalysed reaction is L-ribulose + ATP = L-ribulose 5-phosphate + ADP + H(+). It functions in the pathway carbohydrate degradation; L-arabinose degradation via L-ribulose; D-xylulose 5-phosphate from L-arabinose (bacterial route): step 2/3. The polypeptide is Ribulokinase 1 (Staphylococcus saprophyticus subsp. saprophyticus (strain ATCC 15305 / DSM 20229 / NCIMB 8711 / NCTC 7292 / S-41)).